A 238-amino-acid polypeptide reads, in one-letter code: LexA repressor (238 aa).

The H-T-H motif DNA-binding region spans 26–46 (FDEMKDALDLASKSGIHRLIT). Catalysis depends on for autocatalytic cleavage activity residues Ser-158 and Lys-196.

The protein belongs to the peptidase S24 family. In terms of assembly, homodimer.

It carries out the reaction Hydrolysis of Ala-|-Gly bond in repressor LexA.. In terms of biological role, represses a number of genes involved in the response to DNA damage (SOS response), including recA and lexA. In the presence of single-stranded DNA, RecA interacts with LexA causing an autocatalytic cleavage which disrupts the DNA-binding part of LexA, leading to derepression of the SOS regulon and eventually DNA repair. The sequence is that of LexA repressor from Rhizobium meliloti (strain 1021) (Ensifer meliloti).